Consider the following 629-residue polypeptide: Probable alpha-L-arabinofuranosidase A (629 aa).

Residues 1-25 form the signal peptide; the sequence is MVALSTLSGLSALPFLFSLVQNVYG. Residues asparagine 36, asparagine 51, asparagine 140, asparagine 152, asparagine 168, asparagine 171, asparagine 260, asparagine 494, and asparagine 534 are each glycosylated (N-linked (GlcNAc...) asparagine).

This sequence belongs to the glycosyl hydrolase 51 family.

The protein resides in the secreted. The catalysed reaction is Hydrolysis of terminal non-reducing alpha-L-arabinofuranoside residues in alpha-L-arabinosides.. It functions in the pathway glycan metabolism; L-arabinan degradation. Its function is as follows. Alpha-L-arabinofuranosidase involved in the degradation of arabinoxylan, a major component of plant hemicellulose. Acts only on small linear 1,5-alpha-linked L-arabinofuranosyl oligosaccharides. The sequence is that of Probable alpha-L-arabinofuranosidase A (abfA) from Aspergillus oryzae (strain ATCC 42149 / RIB 40) (Yellow koji mold).